Consider the following 367-residue polypeptide: Glutamate 5-kinase (367 aa).

Lys-9 is an ATP binding site. Ser-49, Asp-136, and Asn-148 together coordinate substrate. ATP is bound by residues 168–169 (TD) and 210–216 (TGGMKSK). The 75-residue stretch at 276–350 (SGQIEVDAGA…GMQSQDIQVR (75 aa)) folds into the PUA domain.

It belongs to the glutamate 5-kinase family.

Its subcellular location is the cytoplasm. It carries out the reaction L-glutamate + ATP = L-glutamyl 5-phosphate + ADP. It participates in amino-acid biosynthesis; L-proline biosynthesis; L-glutamate 5-semialdehyde from L-glutamate: step 1/2. Functionally, catalyzes the transfer of a phosphate group to glutamate to form L-glutamate 5-phosphate. In Bacillus cereus (strain ATCC 14579 / DSM 31 / CCUG 7414 / JCM 2152 / NBRC 15305 / NCIMB 9373 / NCTC 2599 / NRRL B-3711), this protein is Glutamate 5-kinase.